The primary structure comprises 168 residues: Thiol peroxidase (168 aa).

Residues 19 to 168 (PQAGSKAQTF…YEAALAVLKA (150 aa)) enclose the Thioredoxin domain. C61 acts as the Cysteine sulfenic acid (-SOH) intermediate in catalysis. Cysteines 61 and 95 form a disulfide.

The protein belongs to the peroxiredoxin family. Tpx subfamily. As to quaternary structure, homodimer.

It carries out the reaction a hydroperoxide + [thioredoxin]-dithiol = an alcohol + [thioredoxin]-disulfide + H2O. In terms of biological role, thiol-specific peroxidase that catalyzes the reduction of hydrogen peroxide and organic hydroperoxides to water and alcohols, respectively. Plays a role in cell protection against oxidative stress by detoxifying peroxides. This Shigella dysenteriae protein is Thiol peroxidase.